The primary structure comprises 457 residues: Bifunctional protein GlmU (457 aa).

The interval 1–230 is pyrophosphorylase; that stretch reads MSKRYAVVLA…FEESLGVNDR (230 aa). Residues 9–12, lysine 23, glutamine 73, and 78–79 each bind UDP-N-acetyl-alpha-D-glucosamine; these read LAAG and GT. Aspartate 103 is a binding site for Mg(2+). Positions 140, 155, 170, and 228 each coordinate UDP-N-acetyl-alpha-D-glucosamine. Residue asparagine 228 coordinates Mg(2+). The interval 231-251 is linker; it reads IALAEASKLMQRRINENHMRN. The segment at 252 to 457 is N-acetyltransferase; sequence GVTLVNPENT…GYAKHLNHGK (206 aa). Residues arginine 333 and lysine 351 each contribute to the UDP-N-acetyl-alpha-D-glucosamine site. Residue histidine 363 is the Proton acceptor of the active site. Tyrosine 366 and asparagine 377 together coordinate UDP-N-acetyl-alpha-D-glucosamine. Acetyl-CoA-binding positions include 386 to 387, alanine 423, and arginine 440; that span reads NY.

In the N-terminal section; belongs to the N-acetylglucosamine-1-phosphate uridyltransferase family. The protein in the C-terminal section; belongs to the transferase hexapeptide repeat family. Homotrimer. The cofactor is Mg(2+).

It localises to the cytoplasm. It carries out the reaction alpha-D-glucosamine 1-phosphate + acetyl-CoA = N-acetyl-alpha-D-glucosamine 1-phosphate + CoA + H(+). The enzyme catalyses N-acetyl-alpha-D-glucosamine 1-phosphate + UTP + H(+) = UDP-N-acetyl-alpha-D-glucosamine + diphosphate. It functions in the pathway nucleotide-sugar biosynthesis; UDP-N-acetyl-alpha-D-glucosamine biosynthesis; N-acetyl-alpha-D-glucosamine 1-phosphate from alpha-D-glucosamine 6-phosphate (route II): step 2/2. Its pathway is nucleotide-sugar biosynthesis; UDP-N-acetyl-alpha-D-glucosamine biosynthesis; UDP-N-acetyl-alpha-D-glucosamine from N-acetyl-alpha-D-glucosamine 1-phosphate: step 1/1. It participates in bacterial outer membrane biogenesis; LPS lipid A biosynthesis. Its function is as follows. Catalyzes the last two sequential reactions in the de novo biosynthetic pathway for UDP-N-acetylglucosamine (UDP-GlcNAc). The C-terminal domain catalyzes the transfer of acetyl group from acetyl coenzyme A to glucosamine-1-phosphate (GlcN-1-P) to produce N-acetylglucosamine-1-phosphate (GlcNAc-1-P), which is converted into UDP-GlcNAc by the transfer of uridine 5-monophosphate (from uridine 5-triphosphate), a reaction catalyzed by the N-terminal domain. In Listeria innocua serovar 6a (strain ATCC BAA-680 / CLIP 11262), this protein is Bifunctional protein GlmU.